The sequence spans 414 residues: Adenylosuccinate synthetase (414 aa).

Residues 12 to 18 and 40 to 42 each bind GTP; these read GDEGKGK and GHT. D13 acts as the Proton acceptor in catalysis. Mg(2+) is bound by residues D13 and G40. Residues 13–16, 38–41, T124, R138, Q216, T231, and R297 contribute to the IMP site; these read DEGK and NAGH. H41 acts as the Proton donor in catalysis. 293–299 serves as a coordination point for substrate; it reads STTGRPR. GTP contacts are provided by residues R299, 325 to 327, and 403 to 405; these read KLD and STG.

The protein belongs to the adenylosuccinate synthetase family. In terms of assembly, homodimer. Requires Mg(2+) as cofactor.

The protein resides in the cytoplasm. The enzyme catalyses IMP + L-aspartate + GTP = N(6)-(1,2-dicarboxyethyl)-AMP + GDP + phosphate + 2 H(+). The protein operates within purine metabolism; AMP biosynthesis via de novo pathway; AMP from IMP: step 1/2. Plays an important role in the de novo pathway of purine nucleotide biosynthesis. Catalyzes the first committed step in the biosynthesis of AMP from IMP. This Hydrogenobaculum sp. (strain Y04AAS1) protein is Adenylosuccinate synthetase.